Reading from the N-terminus, the 351-residue chain is Probable cobalt-factor III C(17)-methyltransferase (351 aa).

It belongs to the precorrin methyltransferase family.

The catalysed reaction is Co(II)-factor III + S-adenosyl-L-methionine + H(+) = Co(II)-factor IV + S-adenosyl-L-homocysteine. Its pathway is cofactor biosynthesis; adenosylcobalamin biosynthesis; cob(II)yrinate a,c-diamide from sirohydrochlorin (anaerobic route): step 3/10. In terms of biological role, methyltransferase that likely catalyzes the ring contraction and methylation of C-17 in cobalt-factor III to form cobalt-factor IV. May also convert cobalt-precorrin-3 to cobalt-precorrin-4. This Methanothermobacter thermautotrophicus (strain ATCC 29096 / DSM 1053 / JCM 10044 / NBRC 100330 / Delta H) (Methanobacterium thermoautotrophicum) protein is Probable cobalt-factor III C(17)-methyltransferase (cbiH).